We begin with the raw amino-acid sequence, 721 residues long: Homeobox-leucine zipper protein HDG2 (721 aa).

The disordered stretch occupies residues 17-70; sequence NNHNYNHEDNNNEGFLRDDEFDSPNTKSGSENQEGGSGNDQDPLHPNKKKRYHR. Basic and acidic residues predominate over residues 21 to 34; that stretch reads YNHEDNNNEGFLRD. Positions 64–123 form a DNA-binding region, homeobox; the sequence is KKKRYHRHTQLQIQEMEAFFKECPHPDDKQRKQLSRELNLEPLQVKFWFQNKRTQMKNHH. A coiled-coil region spans residues 120-194; the sequence is KNHHERHENS…DRISAIAAKY (75 aa). Positions 242–468 constitute an START domain; the sequence is TESDKPVIID…LDRQCERLAS (227 aa).

The protein belongs to the HD-ZIP homeobox family. Class IV subfamily. Interacts with AIL7/PLT7, ANT, BBM and AIL1. As to expression, expressed in hairless cell files of the hypocotyl epidermis. Expressed in shoot apical meristem (SAM) with higher levels in L1 cells and the epidermal layer of young leaves. Expressed in primary root tips, in the L1 of apical inflorescence meristems, early flower primordia, carpel epidermis, ovule primordia, nucellus, chalaze and seed coat.

The protein resides in the nucleus. Probable transcription factor. Involved, together with PDF2, in the regulation of flower organs development by promoting the expression of APETALA 3 (AP3) in the epidermis and internal cell layers of developing flowers. This Arabidopsis thaliana (Mouse-ear cress) protein is Homeobox-leucine zipper protein HDG2.